The primary structure comprises 495 residues: Amorpha-4,11-diene 12-monooxygenase (495 aa).

Residues 1 to 6 (MKSILK) are Cytoplasmic-facing. A helical; Signal-anchor for type II membrane protein membrane pass occupies residues 7 to 29 (AMALSLTTSIALATILLFVYKFA). The Lumenal portion of the chain corresponds to 30–495 (TRSKSTKKSL…KTELLLVPSF (466 aa)). Residues asparagine 176, asparagine 261, asparagine 267, asparagine 386, and asparagine 417 are each glycosylated (N-linked (GlcNAc...) asparagine). Cysteine 439 provides a ligand contact to heme.

Belongs to the cytochrome P450 family. Requires heme as cofactor. As to expression, highly expressed both in apical and sub-apical cells of glandular secretory trichomes. Detected in flower buds, leaves and roots. Also present in non-glandular trichome cells.

It is found in the endoplasmic reticulum membrane. It catalyses the reaction (+)-amorpha-4,11-diene + 3 reduced [NADPH--hemoprotein reductase] + 3 O2 = (+)-artemisinate + 3 oxidized [NADPH--hemoprotein reductase] + 4 H2O + 4 H(+). The protein operates within sesquiterpene biosynthesis. Its function is as follows. Involved in the biosynthesis of the antimalarial endoperoxide artemisinin. Catalyzes three consecutive oxidations of amorpha-4,11-diene to produce artemisinic acid, with artemisinic alcohol and artemisinic aldehyde as intermediates products, but is unable to oxidize germacrene A. No activity with limonene, alpha-pinene, beta-pinene, pinocarveol, (-)-alloisolongifolene, caryophyllene, (-)-alpha-gurjunene, (+)-gamma-gurjunene, (+)-ledene, (+)-beta-selinene and (+)-valencene as substrates. The polypeptide is Amorpha-4,11-diene 12-monooxygenase (Artemisia annua (Sweet wormwood)).